Reading from the N-terminus, the 241-residue chain is Caffeoyl-CoA O-methyltransferase (241 aa).

Lys14 serves as a coordination point for substrate. S-adenosyl-L-methionine is bound by residues Thr58, Glu80, 82-83 (GV), Ser88, Asp106, and Ala135. Asp158 provides a ligand contact to substrate. Residue Asp158 coordinates a divalent metal cation. Asp160 provides a ligand contact to S-adenosyl-L-methionine. A divalent metal cation-binding residues include Asp184 and Asn185.

This sequence belongs to the class I-like SAM-binding methyltransferase superfamily. Cation-dependent O-methyltransferase family. CCoAMT subfamily. A divalent metal cation serves as cofactor.

It catalyses the reaction (E)-caffeoyl-CoA + S-adenosyl-L-methionine = (E)-feruloyl-CoA + S-adenosyl-L-homocysteine + H(+). The protein operates within aromatic compound metabolism; phenylpropanoid biosynthesis. Its function is as follows. Methylates caffeoyl-CoA to feruloyl-CoA and 5-hydroxyferuloyl-CoA to sinapoyl-CoA. Plays a role in the synthesis of feruloylated polysaccharides. Involved in the reinforcement of the plant cell wall. Also involved in the responding to wounding or pathogen challenge by the increased formation of cell wall-bound ferulic acid polymers. In Stellaria longipes (Longstalk starwort), this protein is Caffeoyl-CoA O-methyltransferase.